We begin with the raw amino-acid sequence, 113 residues long: Large ribosomal subunit protein uL22 (113 aa).

The protein belongs to the universal ribosomal protein uL22 family. Part of the 50S ribosomal subunit.

In terms of biological role, this protein binds specifically to 23S rRNA; its binding is stimulated by other ribosomal proteins, e.g. L4, L17, and L20. It is important during the early stages of 50S assembly. It makes multiple contacts with different domains of the 23S rRNA in the assembled 50S subunit and ribosome. Its function is as follows. The globular domain of the protein is located near the polypeptide exit tunnel on the outside of the subunit, while an extended beta-hairpin is found that lines the wall of the exit tunnel in the center of the 70S ribosome. The chain is Large ribosomal subunit protein uL22 from Bacillus cytotoxicus (strain DSM 22905 / CIP 110041 / 391-98 / NVH 391-98).